Consider the following 126-residue polypeptide: Large ribosomal subunit protein bL20 (126 aa).

This sequence belongs to the bacterial ribosomal protein bL20 family.

Functionally, binds directly to 23S ribosomal RNA and is necessary for the in vitro assembly process of the 50S ribosomal subunit. It is not involved in the protein synthesizing functions of that subunit. The polypeptide is Large ribosomal subunit protein bL20 (Nocardia farcinica (strain IFM 10152)).